The primary structure comprises 266 residues: ATP synthase subunit a (266 aa).

5 consecutive transmembrane segments (helical) span residues 33 to 53 (FWTL…LFLA), 95 to 115 (VIAP…LMDL), 141 to 161 (DVNI…FYSI), 206 to 226 (LFGN…LLPW), and 237 to 257 (AIFH…LTIV).

Belongs to the ATPase A chain family. As to quaternary structure, F-type ATPases have 2 components, CF(1) - the catalytic core - and CF(0) - the membrane proton channel. CF(1) has five subunits: alpha(3), beta(3), gamma(1), delta(1), epsilon(1). CF(0) has three main subunits: a(1), b(2) and c(9-12). The alpha and beta chains form an alternating ring which encloses part of the gamma chain. CF(1) is attached to CF(0) by a central stalk formed by the gamma and epsilon chains, while a peripheral stalk is formed by the delta and b chains.

The protein localises to the cell inner membrane. Its function is as follows. Key component of the proton channel; it plays a direct role in the translocation of protons across the membrane. In Klebsiella pneumoniae subsp. pneumoniae (strain ATCC 700721 / MGH 78578), this protein is ATP synthase subunit a.